Here is a 195-residue protein sequence, read N- to C-terminus: Ras-related protein Rab-31 (195 aa).

Residues Gly-16, Gly-18, Lys-19, Ser-20, Ser-21, Asp-32, and His-33 each contribute to the GTP site. Ser-20 is a binding site for Mg(2+). 2 short sequence motifs (switch) span residues 30 to 42 (HFDHNISPTIGAS) and 63 to 79 (AGQERFHSLAPMYYRGS). Position 36 is a phosphoserine (Ser-36). Positions 38, 64, 119, 122, 150, and 151 each coordinate GTP. Thr-38 contacts Mg(2+). The tract at residues 168–195 (PPLGPQENGNSGGIKLGNQSLQASRRCC) is disordered. Residues 184 to 195 (GNQSLQASRRCC) show a composition bias toward polar residues. S-geranylgeranyl cysteine attachment occurs at residues Cys-194 and Cys-195.

This sequence belongs to the small GTPase superfamily. Rab family. In terms of assembly, interacts with OCRL. Interacts (in GDP-bound form) with RIN3 and GAPVD1, which function as guanine exchange factors (GEF). Interacts with EGFR. Interacts with NGFR. Interacts (in GTP-bound form) with EEA1. Interacts (in GTP-bound form) with APPL2; interaction contributes to or enhances recruitment of APPL2 to the phagosomes; interaction enhances Fc-gamma receptor-mediated phagocytosis through PI3K/Akt signaling in macrophages. The cofactor is Mg(2+). Detected in brain astrocytes (at protein level).

The protein resides in the early endosome. The protein localises to the golgi apparatus. It is found in the trans-Golgi network. Its subcellular location is the trans-Golgi network membrane. It localises to the cytoplasmic vesicle. The protein resides in the phagosome. The protein localises to the phagosome membrane. It catalyses the reaction GTP + H2O = GDP + phosphate + H(+). Regulated by guanine nucleotide exchange factors (GEFs) including RIN3 and GAPVD1 which promote the exchange of bound GDP for free GTP. Regulated by GTPase activating proteins (GAPs) which increase the GTP hydrolysis activity. Inhibited by GDP dissociation inhibitors (GDIs) which prevent Rab-GDP dissociation. Functionally, the small GTPases Rab are key regulators of intracellular membrane trafficking, from the formation of transport vesicles to their fusion with membranes. Rabs cycle between an inactive GDP-bound form and an active GTP-bound form that is able to recruit to membranes different set of downstream effectors directly responsible for vesicle formation, movement, tethering and fusion. Required for the integrity and for normal function of the Golgi apparatus and the trans-Golgi network. Plays a role in insulin-stimulated translocation of GLUT4 to the cell membrane. Plays a role in the maturation of phagosomes that engulf pathogens, such as S.aureus and Mycobacterium. Plays a role in M6PR transport from the trans-Golgi network to endosomes. Plays a role in the internalization of EGFR from the cell membrane into endosomes. The chain is Ras-related protein Rab-31 from Mus musculus (Mouse).